A 523-amino-acid polypeptide reads, in one-letter code: 2-isopropylmalate synthase (523 aa).

The Pyruvate carboxyltransferase domain maps to 5–267 (VIIFDTTLRD…ETGINAKEIH (263 aa)). The Mn(2+) site is built by Asp-14, His-202, His-204, and Asn-238. Residues 392-523 (KLQQLVVHSD…QQNKRELGGV (132 aa)) are regulatory domain.

The protein belongs to the alpha-IPM synthase/homocitrate synthase family. LeuA type 1 subfamily. In terms of assembly, homodimer. Mn(2+) serves as cofactor.

It is found in the cytoplasm. The enzyme catalyses 3-methyl-2-oxobutanoate + acetyl-CoA + H2O = (2S)-2-isopropylmalate + CoA + H(+). It participates in amino-acid biosynthesis; L-leucine biosynthesis; L-leucine from 3-methyl-2-oxobutanoate: step 1/4. Catalyzes the condensation of the acetyl group of acetyl-CoA with 3-methyl-2-oxobutanoate (2-ketoisovalerate) to form 3-carboxy-3-hydroxy-4-methylpentanoate (2-isopropylmalate). In Shewanella pealeana (strain ATCC 700345 / ANG-SQ1), this protein is 2-isopropylmalate synthase.